The chain runs to 137 residues: Transcription antitermination protein NusB (137 aa).

The protein belongs to the NusB family.

Functionally, involved in transcription antitermination. Required for transcription of ribosomal RNA (rRNA) genes. Binds specifically to the boxA antiterminator sequence of the ribosomal RNA (rrn) operons. This Aeromonas salmonicida (strain A449) protein is Transcription antitermination protein NusB.